Reading from the N-terminus, the 266-residue chain is Exosome complex component Rrp42 (266 aa).

This sequence belongs to the RNase PH family. Rrp42 subfamily. As to quaternary structure, component of the archaeal exosome complex. Forms a hexameric ring-like arrangement composed of 3 Rrp41-Rrp42 heterodimers. The hexameric ring associates with a trimer of Rrp4 and/or Csl4 subunits.

It localises to the cytoplasm. Functionally, non-catalytic component of the exosome, which is a complex involved in RNA degradation. Contributes to the structuring of the Rrp41 active site. The polypeptide is Exosome complex component Rrp42 (Methanosarcina acetivorans (strain ATCC 35395 / DSM 2834 / JCM 12185 / C2A)).